We begin with the raw amino-acid sequence, 218 residues long: Small ribosomal subunit protein uS3c (218 aa).

The KH type-2 domain maps to 43-118 (IKNYVQKNMK…KLNISITRIE (76 aa)).

Belongs to the universal ribosomal protein uS3 family. In terms of assembly, part of the 30S ribosomal subunit.

Its subcellular location is the plastid. The protein resides in the chloroplast. The chain is Small ribosomal subunit protein uS3c (rps3) from Populus alba (White poplar).